A 107-amino-acid chain; its full sequence is Frataxin (107 aa).

The protein belongs to the frataxin family. Monomer.

The protein resides in the cytoplasm. Functionally, promotes the assembly and repair of iron-sulfur clusters by delivering Fe(2+) to proteins involved in these pathways. This Trachipleistophora hominis (Microsporidian parasite) protein is Frataxin (YFH1).